Reading from the N-terminus, the 345-residue chain is NADPH dehydrogenase (345 aa).

23 to 26 (SPMC) is an FMN binding site. Tyrosine 28 is a binding site for substrate. FMN-binding residues include alanine 60 and glutamine 102. 164–167 (HGAH) serves as a coordination point for substrate. FMN is bound by residues arginine 215 and 307–308 (GR).

This sequence belongs to the NADH:flavin oxidoreductase/NADH oxidase family. NamA subfamily. As to quaternary structure, homotetramer. Requires FMN as cofactor.

It catalyses the reaction A + NADPH + H(+) = AH2 + NADP(+). Catalyzes the reduction of the double bond of an array of alpha,beta-unsaturated aldehydes and ketones. It also reduces the nitro group of nitroester and nitroaromatic compounds. It could have a role in detoxification processes. The polypeptide is NADPH dehydrogenase (Bacillus cereus (strain ZK / E33L)).